Reading from the N-terminus, the 142-residue chain is Hemoglobin subunit alpha (142 aa).

In terms of domain architecture, Globin spans valine 2–arginine 142. Residue serine 4 is modified to Phosphoserine. An N6-succinyllysine mark is found at lysine 8 and lysine 12. An N6-acetyllysine; alternate modification is found at lysine 17. Lysine 17 carries the N6-succinyllysine; alternate modification. Position 25 is a phosphotyrosine (tyrosine 25). Serine 36 carries the phosphoserine modification. An N6-succinyllysine modification is found at lysine 41. Phosphoserine is present on serine 50. An O2-binding site is contributed by histidine 59. Position 88 (histidine 88) interacts with heme b. Position 103 is a phosphoserine (serine 103). Threonine 109 is subject to Phosphothreonine. Position 125 is a phosphoserine (serine 125). Residues threonine 135 and threonine 138 each carry the phosphothreonine modification. Serine 139 carries the post-translational modification Phosphoserine.

It belongs to the globin family. In terms of assembly, heterotetramer of two alpha chains and two beta chains. As to expression, red blood cells.

Functionally, involved in oxygen transport from the lung to the various peripheral tissues. In terms of biological role, hemopressin acts as an antagonist peptide of the cannabinoid receptor CNR1. Hemopressin-binding efficiently blocks cannabinoid receptor CNR1 and subsequent signaling. The sequence is that of Hemoglobin subunit alpha (HBA) from Panthera leo (Lion).